Consider the following 2139-residue polypeptide: U5 small nuclear ribonucleoprotein 200 kDa helicase (2139 aa).

Residues Ser17 and Ser26 each carry the phosphoserine modification. The tract at residues 39 to 80 (EVLSLVGKLEGTRMGDKAQRTKPQMQEERRAKRRKRDEDRHD) is disordered. A Glycyl lysine isopeptide (Lys-Gly) (interchain with G-Cter in SUMO2) cross-link involves residue Lys46. The segment covering 48-80 (EGTRMGDKAQRTKPQMQEERRAKRRKRDEDRHD) has biased composition (basic and acidic residues). Positions 54–84 (DKAQRTKPQMQEERRAKRRKRDEDRHDINKM) form a coiled coil. Ser225 carries the phosphoserine modification. Thr389 is subject to Phosphothreonine. The interaction with C9orf78 and WBP4 stretch occupies residues 395–2132 (DLDQGGEALA…YKFSVDVKEA (1738 aa)). Residues 490-673 (RAALETDENL…FLRVDPAKGL (184 aa)) form the Helicase ATP-binding 1 domain. 503 to 510 (APTGAGKT) lines the ATP pocket. Residues 615–618 (DEIH) carry the DEAH box motif. The region spanning 684–921 (PLEQTYVGIT…NAKDAVNWLG (238 aa)) is the Helicase C-terminal 1 domain. Tyr709 is modified (phosphotyrosine). Lys944 participates in a covalent cross-link: Glycyl lysine isopeptide (Lys-Gly) (interchain with G-Cter in SUMO). Lys971 carries the N6-acetyllysine; alternate modification. Residue Lys971 forms a Glycyl lysine isopeptide (Lys-Gly) (interchain with G-Cter in SUMO); alternate linkage. In terms of domain architecture, SEC63 1 spans 982 to 1289 (TELGRIASHY…SCETQLPVSF (308 aa)). Glycyl lysine isopeptide (Lys-Gly) (interchain with G-Cter in SUMO) cross-links involve residues Lys1071 and Lys1199. Positions 1285-2139 (LPVSFRHLIL…KEAETDSDSD (855 aa)) are interaction with TSSC4. The region spanning 1340 to 1515 (NTVYNSDDNV…WLGCSATSTF (176 aa)) is the Helicase ATP-binding 2 domain. Residue 1353–1360 (APTGSGKT) participates in ATP binding. At Thr1431 the chain carries Phosphothreonine. Positions 1457 to 1460 (DEVH) match the DEAH box motif. The Helicase C-terminal 2 domain occupies 1548 to 1756 (PVYHAITKHS…TIENKQDAVD (209 aa)). Thr1768 carries the post-translational modification Phosphothreonine. In terms of domain architecture, SEC63 2 spans 1815–2127 (PLNLGMIAAY…GCDQEYKFSV (313 aa)). Ser2005 carries the post-translational modification Phosphoserine. Residue Lys2094 forms a Glycyl lysine isopeptide (Lys-Gly) (interchain with G-Cter in SUMO) linkage. Thr2134 is modified (phosphothreonine). Phosphoserine occurs at positions 2136 and 2138.

This sequence belongs to the helicase family. SKI2 subfamily. As to quaternary structure, component of a core complex containing at least PRPF8, SNRNP200, EFTUD2 and SNRNP40. Component of the U5 snRNP and U4/U6-U5 tri-snRNP complexes, building blocks of the spliceosome. Component of the U4/U6-U5 tri-snRNP complex composed of the U4, U6 and U5 snRNAs and at least PRPF3, PRPF4, PRPF6, PRPF8, PRPF31, SNRNP200, TXNL4A, SNRNP40, DDX23, CD2BP2, PPIH, SNU13, EFTUD2, SART1 and USP39. Component of precatalytic, catalytic and postcatalytic spliceosomal complexes. Component of the minor spliceosome, which splices U12-type introns. Interacts with C9orf78; the interaction is direct and mutually exclusive with its interaction with WBP4. Interacts with WBP4; the interaction is mutually exclusive with its interaction with C9orf78. Interacts with PRPF8. Interacts with TSSC4; the interaction is direct, excludes recruitment of C9ORF78 and WBP4 to SNRNP200 and negatively regulates its RNA helicase activity.

The protein localises to the nucleus. It catalyses the reaction ATP + H2O = ADP + phosphate + H(+). Functionally, catalyzes the ATP-dependent unwinding of U4/U6 RNA duplices, an essential step in the assembly of a catalytically active spliceosome. Plays a role in pre-mRNA splicing as core component of precatalytic, catalytic and postcatalytic spliceosomal complexes. As a component of the minor spliceosome, involved in the splicing of U12-type introns in pre-mRNAs. Involved in spliceosome assembly, activation and disassembly. Mediates changes in the dynamic network of RNA-RNA interactions in the spliceosome. In Rattus norvegicus (Rat), this protein is U5 small nuclear ribonucleoprotein 200 kDa helicase (Snrnp200).